The following is a 776-amino-acid chain: DNA topoisomerase 1 (776 aa).

A Toprim domain is found at 1–111 (MKLVIVESPA…VKSDDFFKRV (111 aa)). Mg(2+) is bound by residues Glu-7 and Asp-80. A Topo IA-type catalytic domain is found at 132 to 568 (DANLVNAQQA…FWSGFNHNIE (437 aa)). An interaction with DNA region spans residues 166-171 (SAGRVQ). Tyr-304 serves as the catalytic O-(5'-phospho-DNA)-tyrosine intermediate. Residues 600–627 (CPSCKTGELSLKLGKFGAFLACSNYPEC) form a C4-type zinc finger.

This sequence belongs to the type IA topoisomerase family. In terms of assembly, monomer. Mg(2+) is required as a cofactor.

It carries out the reaction ATP-independent breakage of single-stranded DNA, followed by passage and rejoining.. Functionally, releases the supercoiling and torsional tension of DNA, which is introduced during the DNA replication and transcription, by transiently cleaving and rejoining one strand of the DNA duplex. Introduces a single-strand break via transesterification at a target site in duplex DNA. The scissile phosphodiester is attacked by the catalytic tyrosine of the enzyme, resulting in the formation of a DNA-(5'-phosphotyrosyl)-enzyme intermediate and the expulsion of a 3'-OH DNA strand. The free DNA strand then undergoes passage around the unbroken strand, thus removing DNA supercoils. Finally, in the religation step, the DNA 3'-OH attacks the covalent intermediate to expel the active-site tyrosine and restore the DNA phosphodiester backbone. The protein is DNA topoisomerase 1 of Rickettsia felis (strain ATCC VR-1525 / URRWXCal2) (Rickettsia azadi).